We begin with the raw amino-acid sequence, 344 residues long: MMVIRPVERSDVSALMQLASKTGGGLTSLPANEATLSARIERAIKTWQGELPKSEQGYVFVLEDSETGTVAGICAIEVAVGLNDPWYNYRVGTLVHASKELNVYNALPTLFLSNDHTGSSELCTLFLDPDWRKEGNGYLLSKSRFMFMAAFRDKFNDKVVAEMRGVIDEHGYSPFWQSLGKRFFSMDFSRADFLCGTGQKAFIAELMPKHPIYTHFLSQEAQDVIGQVHPQTAPARAVLEKEGFRYRNYIDIFDGGPTLECDIDRVRAIRKSRLVEVAEGQPAQGDFPACLVANENYHHFRVVLARTDPATERLILTAAQLDALKCHAGDRVRLVRLCAEEKTA.

Leucine 125 contacts succinyl-CoA. Histidine 229 acts as the Proton donor in catalysis.

The protein belongs to the arginine N-succinyltransferase family.

The catalysed reaction is succinyl-CoA + L-arginine = N(2)-succinyl-L-arginine + CoA + H(+). The protein operates within amino-acid degradation; L-arginine degradation via AST pathway; L-glutamate and succinate from L-arginine: step 1/5. Its function is as follows. Catalyzes the transfer of succinyl-CoA to arginine to produce N(2)-succinylarginine. In Shigella flexneri, this protein is Arginine N-succinyltransferase.